Consider the following 268-residue polypeptide: Ribosomal RNA small subunit methyltransferase A (268 aa).

Asparagine 18, leucine 20, glycine 45, glutamate 66, aspartate 91, and asparagine 112 together coordinate S-adenosyl-L-methionine.

It belongs to the class I-like SAM-binding methyltransferase superfamily. rRNA adenine N(6)-methyltransferase family. RsmA subfamily.

The protein localises to the cytoplasm. It carries out the reaction adenosine(1518)/adenosine(1519) in 16S rRNA + 4 S-adenosyl-L-methionine = N(6)-dimethyladenosine(1518)/N(6)-dimethyladenosine(1519) in 16S rRNA + 4 S-adenosyl-L-homocysteine + 4 H(+). In terms of biological role, specifically dimethylates two adjacent adenosines (A1518 and A1519) in the loop of a conserved hairpin near the 3'-end of 16S rRNA in the 30S particle. May play a critical role in biogenesis of 30S subunits. The sequence is that of Ribosomal RNA small subunit methyltransferase A from Shewanella oneidensis (strain ATCC 700550 / JCM 31522 / CIP 106686 / LMG 19005 / NCIMB 14063 / MR-1).